We begin with the raw amino-acid sequence, 29 residues long: Cytochrome b6-f complex subunit 8 (29 aa).

A helical transmembrane segment spans residues 3-23 (ILTLGWVGLLGLFTYSIAMVV).

The protein belongs to the PetN family. In terms of assembly, the 4 large subunits of the cytochrome b6-f complex are cytochrome b6, subunit IV (17 kDa polypeptide, PetD), cytochrome f and the Rieske protein, while the 4 small subunits are PetG, PetL, PetM and PetN. The complex functions as a dimer.

The protein resides in the cellular thylakoid membrane. In terms of biological role, component of the cytochrome b6-f complex, which mediates electron transfer between photosystem II (PSII) and photosystem I (PSI), cyclic electron flow around PSI, and state transitions. This Cyanothece sp. (strain PCC 7425 / ATCC 29141) protein is Cytochrome b6-f complex subunit 8.